A 294-amino-acid polypeptide reads, in one-letter code: Pyridoxal 5'-phosphate synthase subunit PdxS (294 aa).

D-ribose 5-phosphate is bound at residue D24. K81 (schiff-base intermediate with D-ribose 5-phosphate) is an active-site residue. G153 contacts D-ribose 5-phosphate. R165 serves as a coordination point for D-glyceraldehyde 3-phosphate. D-ribose 5-phosphate-binding positions include G214 and 235 to 236 (GS).

The protein belongs to the PdxS/SNZ family. In the presence of PdxT, forms a dodecamer of heterodimers.

It carries out the reaction aldehydo-D-ribose 5-phosphate + D-glyceraldehyde 3-phosphate + L-glutamine = pyridoxal 5'-phosphate + L-glutamate + phosphate + 3 H2O + H(+). It participates in cofactor biosynthesis; pyridoxal 5'-phosphate biosynthesis. Its function is as follows. Catalyzes the formation of pyridoxal 5'-phosphate from ribose 5-phosphate (RBP), glyceraldehyde 3-phosphate (G3P) and ammonia. The ammonia is provided by the PdxT subunit. Can also use ribulose 5-phosphate and dihydroxyacetone phosphate as substrates, resulting from enzyme-catalyzed isomerization of RBP and G3P, respectively. This is Pyridoxal 5'-phosphate synthase subunit PdxS from Bacillus licheniformis (strain ATCC 14580 / DSM 13 / JCM 2505 / CCUG 7422 / NBRC 12200 / NCIMB 9375 / NCTC 10341 / NRRL NRS-1264 / Gibson 46).